The primary structure comprises 267 residues: Glutamate 5-kinase (267 aa).

K18 contacts ATP. Positions 58, 145, and 157 each coordinate substrate. Residues 177-178 (SD) and 219-225 (TGGMATK) each bind ATP.

Belongs to the glutamate 5-kinase family.

The protein localises to the cytoplasm. The enzyme catalyses L-glutamate + ATP = L-glutamyl 5-phosphate + ADP. The protein operates within amino-acid biosynthesis; L-proline biosynthesis; L-glutamate 5-semialdehyde from L-glutamate: step 1/2. Catalyzes the transfer of a phosphate group to glutamate to form L-glutamate 5-phosphate. This Clostridium tetani (strain Massachusetts / E88) protein is Glutamate 5-kinase.